A 436-amino-acid chain; its full sequence is Mitochondrial distribution and morphology protein 12 (436 aa).

The 436-residue stretch at 1 to 436 (MSIEVNWGTA…VFPSFYTFLI (436 aa)) folds into the SMP-LTD domain. Residues 73 to 84 (DEDGDSGSEISE) are compositionally biased toward acidic residues. 3 disordered regions span residues 73–98 (DEDGDSGSEISEELQHRTHDNPWDRT), 184–275 (AVAG…RMRE), and 352–380 (GSGSYSGQQETPGPSTGSSGGGNPSPHQK). The span at 85–98 (ELQHRTHDNPWDRT) shows a compositional bias: basic and acidic residues. Composition is skewed to polar residues over residues 190-206 (PFTTNWTDPSPMGQGNK) and 222-243 (DSSNPASRPSTASTHPSGSNRS). Residues 244–255 (SHPDGHPEHNDD) show a composition bias toward basic and acidic residues. Positions 256-267 (PISSSENPLLQN) are enriched in polar residues.

It belongs to the MDM12 family. As to quaternary structure, component of the ER-mitochondria encounter structure (ERMES) or MDM complex, composed of mmm1, mdm10, mdm12 and mdm34. A mmm1 homodimer associates with one molecule of mdm12 on each side in a pairwise head-to-tail manner, and the SMP-LTD domains of mmm1 and mdm12 generate a continuous hydrophobic tunnel for phospholipid trafficking.

It localises to the mitochondrion outer membrane. The protein resides in the endoplasmic reticulum membrane. Component of the ERMES/MDM complex, which serves as a molecular tether to connect the endoplasmic reticulum (ER) and mitochondria. Components of this complex are involved in the control of mitochondrial shape and protein biogenesis, and function in nonvesicular lipid trafficking between the ER and mitochondria. Mdm12 is required for the interaction of the ER-resident membrane protein mmm1 and the outer mitochondrial membrane-resident beta-barrel protein mdm10. The mdm12-mmm1 subcomplex functions in the major beta-barrel assembly pathway that is responsible for biogenesis of all mitochondrial outer membrane beta-barrel proteins, and acts in a late step after the SAM complex. The mdm10-mdm12-mmm1 subcomplex further acts in the TOM40-specific pathway after the action of the mdm12-mmm1 complex. Essential for establishing and maintaining the structure of mitochondria and maintenance of mtDNA nucleoids. The sequence is that of Mitochondrial distribution and morphology protein 12 from Emericella nidulans (strain FGSC A4 / ATCC 38163 / CBS 112.46 / NRRL 194 / M139) (Aspergillus nidulans).